We begin with the raw amino-acid sequence, 167 residues long: NADH-quinone oxidoreductase subunit I (167 aa).

4Fe-4S ferredoxin-type domains are found at residues 59 to 88 and 98 to 127; these read RKYK…IEAQ and VRYD…EGPN. [4Fe-4S] cluster-binding residues include Cys68, Cys71, Cys74, Cys78, Cys107, Cys110, Cys113, and Cys117.

Belongs to the complex I 23 kDa subunit family. In terms of assembly, NDH-1 is composed of 14 different subunits. Subunits NuoA, H, J, K, L, M, N constitute the membrane sector of the complex. The cofactor is [4Fe-4S] cluster.

It localises to the cell inner membrane. The enzyme catalyses a quinone + NADH + 5 H(+)(in) = a quinol + NAD(+) + 4 H(+)(out). Functionally, NDH-1 shuttles electrons from NADH, via FMN and iron-sulfur (Fe-S) centers, to quinones in the respiratory chain. The immediate electron acceptor for the enzyme in this species is believed to be ubiquinone. Couples the redox reaction to proton translocation (for every two electrons transferred, four hydrogen ions are translocated across the cytoplasmic membrane), and thus conserves the redox energy in a proton gradient. This chain is NADH-quinone oxidoreductase subunit I, found in Ehrlichia canis (strain Jake).